A 52-amino-acid chain; its full sequence is Sperm protamine P1 (52 aa).

The disordered stretch occupies residues 1-27; the sequence is MARYSCCRSHSRSRSRRRRQRCRRRRR. Over residues 9–27 the composition is skewed to basic residues; that stretch reads SHSRSRSRRRRQRCRRRRR.

Belongs to the protamine P1 family. Testis.

Its subcellular location is the nucleus. The protein localises to the chromosome. In terms of biological role, protamines substitute for histones in the chromatin of sperm during the haploid phase of spermatogenesis. They compact sperm DNA into a highly condensed, stable and inactive complex. The sequence is that of Sperm protamine P1 (PRM1) from Rhinolophus ferrumequinum (Greater horseshoe bat).